A 191-amino-acid chain; its full sequence is dTTP/UTP pyrophosphatase (191 aa).

Residue aspartate 65 is the Proton acceptor of the active site.

This sequence belongs to the Maf family. YhdE subfamily. A divalent metal cation is required as a cofactor.

The protein localises to the cytoplasm. It catalyses the reaction dTTP + H2O = dTMP + diphosphate + H(+). The catalysed reaction is UTP + H2O = UMP + diphosphate + H(+). Functionally, nucleoside triphosphate pyrophosphatase that hydrolyzes dTTP and UTP. May have a dual role in cell division arrest and in preventing the incorporation of modified nucleotides into cellular nucleic acids. The protein is dTTP/UTP pyrophosphatase of Leptospira biflexa serovar Patoc (strain Patoc 1 / Ames).